The primary structure comprises 277 residues: Tumor necrosis factor receptor superfamily member 4 (277 aa).

A signal peptide spans 1–28 (MCVGARRLGRGPCAALLLLGLGLSTVTG). The Extracellular segment spans residues 29 to 214 (LHCVGDTYPS…RPVEVPGGRA (186 aa)). 2 TNFR-Cys repeats span residues 30–65 (HCVG…TVCR) and 66–107 (PCGP…DTVC). Cystine bridges form between cysteine 31-cysteine 42, cysteine 43-cysteine 56, cysteine 46-cysteine 64, cysteine 67-cysteine 81, cysteine 84-cysteine 99, cysteine 87-cysteine 107, cysteine 109-cysteine 125, and cysteine 128-cysteine 141. The stretch at 108–126 (RCRAGTQPLDSYKPGVDCA) is one TNFR-Cys 3; truncated repeat. One copy of the TNFR-Cys 4 repeat lies at 127–167 (PCPPGHFSPGDNQACKPWTNCTLAGKHTLQPASNSSDAICE). N-linked (GlcNAc...) asparagine glycosylation is found at asparagine 146 and asparagine 160. A disulfide bridge links cysteine 147 with cysteine 166. Positions 158–209 (ASNSSDAICEDRDPPATQPQETQGPPARPITVQPTEAWPRTSQGPSTRPVEV) are disordered. A helical membrane pass occupies residues 215 to 235 (VAAILGLGLVLGLLGPLAILL). Residues 236-277 (ALYLLRRDQRLPPDAHKPPGGGSFRTPIQEEQADAHSTLAKI) lie on the Cytoplasmic side of the membrane. Positions 248-277 (PDAHKPPGGGSFRTPIQEEQADAHSTLAKI) are disordered.

As to quaternary structure, interacts with TRAF2, TRAF3 and TRAF5. (Microbial infection) Interacts with Human herpesvirus 6B/HHV-6B gQ1:gQ2 proteins.

The protein localises to the membrane. Functionally, receptor for TNFSF4/OX40L/GP34. Is a costimulatory molecule implicated in long-term T-cell immunity. (Microbial infection) Acts as a receptor for human herpesvirus 6B/HHV-6B. The sequence is that of Tumor necrosis factor receptor superfamily member 4 (TNFRSF4) from Homo sapiens (Human).